A 204-amino-acid chain; its full sequence is High frequency lysogenization protein HflD homolog (204 aa).

This sequence belongs to the HflD family.

It is found in the cytoplasm. The protein localises to the cell inner membrane. The sequence is that of High frequency lysogenization protein HflD homolog from Actinobacillus succinogenes (strain ATCC 55618 / DSM 22257 / CCUG 43843 / 130Z).